The sequence spans 168 residues: Crossover junction endodeoxyribonuclease RuvC (168 aa).

Catalysis depends on residues Asp9, Glu70, and Asp145. Mg(2+) is bound by residues Asp9, Glu70, and Asp145.

Belongs to the RuvC family. As to quaternary structure, homodimer which binds Holliday junction (HJ) DNA. The HJ becomes 2-fold symmetrical on binding to RuvC with unstacked arms; it has a different conformation from HJ DNA in complex with RuvA. In the full resolvosome a probable DNA-RuvA(4)-RuvB(12)-RuvC(2) complex forms which resolves the HJ. It depends on Mg(2+) as a cofactor.

The protein localises to the cytoplasm. The catalysed reaction is Endonucleolytic cleavage at a junction such as a reciprocal single-stranded crossover between two homologous DNA duplexes (Holliday junction).. The RuvA-RuvB-RuvC complex processes Holliday junction (HJ) DNA during genetic recombination and DNA repair. Endonuclease that resolves HJ intermediates. Cleaves cruciform DNA by making single-stranded nicks across the HJ at symmetrical positions within the homologous arms, yielding a 5'-phosphate and a 3'-hydroxyl group; requires a central core of homology in the junction. The consensus cleavage sequence is 5'-(A/T)TT(C/G)-3'. Cleavage occurs on the 3'-side of the TT dinucleotide at the point of strand exchange. HJ branch migration catalyzed by RuvA-RuvB allows RuvC to scan DNA until it finds its consensus sequence, where it cleaves and resolves the cruciform DNA. The polypeptide is Crossover junction endodeoxyribonuclease RuvC (Chlamydia felis (strain Fe/C-56) (Chlamydophila felis)).